The sequence spans 358 residues: DNA polymerase IV (358 aa).

The UmuC domain occupies 4-185 (IIHVDMDCFY…LPLIKIPGVG (182 aa)). Residues D8 and D103 each coordinate Mg(2+). E104 is a catalytic residue.

It belongs to the DNA polymerase type-Y family. In terms of assembly, monomer. Mg(2+) is required as a cofactor.

Its subcellular location is the cytoplasm. The enzyme catalyses DNA(n) + a 2'-deoxyribonucleoside 5'-triphosphate = DNA(n+1) + diphosphate. Its function is as follows. Poorly processive, error-prone DNA polymerase involved in untargeted mutagenesis. Copies undamaged DNA at stalled replication forks, which arise in vivo from mismatched or misaligned primer ends. These misaligned primers can be extended by PolIV. Exhibits no 3'-5' exonuclease (proofreading) activity. May be involved in translesional synthesis, in conjunction with the beta clamp from PolIII. In Shewanella halifaxensis (strain HAW-EB4), this protein is DNA polymerase IV.